The sequence spans 445 residues: Histamine H3 receptor (445 aa).

At Met-1–Ala-40 the chain is on the extracellular side. An N-linked (GlcNAc...) asparagine glycan is attached at Asn-11. Residues Leu-41–Val-61 traverse the membrane as a helical segment. The Cytoplasmic segment spans residues Ala-62–Asn-71. The helical transmembrane segment at Phe-72 to Tyr-92 threads the bilayer. At Val-93–Lys-109 the chain is on the extracellular side. A disulfide bridge connects residues Cys-108 and Cys-189. A helical transmembrane segment spans residues Leu-110 to Ser-130. Residues Tyr-131–Met-157 lie on the Cytoplasmic side of the membrane. A helical transmembrane segment spans residues Val-158–Leu-178. The Extracellular portion of the chain corresponds to Ser-179–Trp-197. Residues Tyr-198 to Phe-218 traverse the membrane as a helical segment. Residues Asn-219–Ser-359 are Cytoplasmic-facing. Disordered stretches follow at residues Gly-236–Trp-264 and Ala-288–Arg-336. The span at Ala-299 to Arg-312 shows a compositional bias: low complexity. The helical transmembrane segment at Leu-360 to Ile-380 threads the bilayer. Residues Arg-381–Phe-398 lie on the Extracellular side of the membrane. The helical transmembrane segment at Trp-399–Phe-419 threads the bilayer. Residues Arg-420–Lys-445 lie on the Cytoplasmic side of the membrane. Ser-439 is subject to Phosphoserine.

Belongs to the G-protein coupled receptor 1 family. In terms of tissue distribution, expressed widely and abundantly throughout the brain. Highly expressed in discrete neuronal populations such as pyramidal cells in cerebral cortex or cerebellar Purkinje cells.

It is found in the cell membrane. Its function is as follows. The H3 subclass of histamine receptors could mediate the histamine signals in CNS and peripheral nervous system. Signals through the inhibition of adenylate cyclase and displays high constitutive activity (spontaneous activity in the absence of agonist). This Cavia porcellus (Guinea pig) protein is Histamine H3 receptor (HRH3).